The following is a 136-amino-acid chain: Protein NrdI (136 aa).

This sequence belongs to the NrdI family.

Probably involved in ribonucleotide reductase function. This Salmonella arizonae (strain ATCC BAA-731 / CDC346-86 / RSK2980) protein is Protein NrdI.